A 62-amino-acid polypeptide reads, in one-letter code: Sucrase-isomaltase, intestinal (62 aa).

The Cytoplasmic segment spans residues 2-12; sequence ARKKFSGLEIX. Residue serine 7 is modified to Phosphoserine; by PKA. The helical; Signal-anchor for type II membrane protein transmembrane segment at 13–32 threads the bilayer; sequence LIVLFAIVLSIAIALVVVXA. At 33–38 the chain is on the lumenal side; it reads SKXPAV. Tyrosine 59 carries the sulfotyrosine modification.

This sequence belongs to the glycosyl hydrolase 31 family. The resulting sucrase and isomaltase subunits stay associated with one another in a complex by non-covalent linkages. The precursor is proteolytically cleaved when exposed to pancreatic proteases in the intestinal lumen. In terms of processing, sulfated.

The protein localises to the apical cell membrane. The enzyme catalyses Hydrolysis of sucrose and maltose by an alpha-D-glucosidase-type action.. It carries out the reaction Hydrolysis of (1-&gt;6)-alpha-D-glucosidic linkages in some oligosaccharides produced from starch and glycogen by alpha-amylase, and in isomaltose.. Plays an important role in the final stage of carbohydrate digestion. Isomaltase activity is specific for both alpha-1,4- and alpha-1,6-oligosaccharides. The chain is Sucrase-isomaltase, intestinal (SI) from Sus scrofa (Pig).